The following is a 245-amino-acid chain: MTLTASSSSRAVTNSPVVVALDYHNRDDALAFVDKIDPRDCRLKVGKEMFTLFGPQFVRELQQRGFDIFLDLKFHDIPNTAAHAVAAAADLGVWMVNVHASGGARMMTAAREALVPFGKDAPLLIAVTVLTSMEASDLVDLGMTLSPADYAERLAALTQKCGLDGVVCSAQEAVRFKQVFGQEFKLVTPGIRPQGSEAGDQRRIMTPEQALSAGVDYMVIGRPVTQSVDPAQTLKAINASLQRSA.

Residues aspartate 22, lysine 44, 71-80 (DLKFHDIPNT), threonine 131, arginine 192, glutamine 201, glycine 221, and arginine 222 each bind substrate. Lysine 73 functions as the Proton donor in the catalytic mechanism.

It belongs to the OMP decarboxylase family. Type 1 subfamily. As to quaternary structure, homodimer.

It carries out the reaction orotidine 5'-phosphate + H(+) = UMP + CO2. It functions in the pathway pyrimidine metabolism; UMP biosynthesis via de novo pathway; UMP from orotate: step 2/2. Functionally, catalyzes the decarboxylation of orotidine 5'-monophosphate (OMP) to uridine 5'-monophosphate (UMP). The sequence is that of Orotidine 5'-phosphate decarboxylase from Escherichia coli (strain K12 / MC4100 / BW2952).